Here is a 618-residue protein sequence, read N- to C-terminus: MAKLRSATTTEGRKRAGARALWRATGMTDSDFGKPIIAVVNSFTQFVPGHVHLNQLSELMGETITAAGGVPKEFNTIAIDDGIAMGHGGMLYSLPSRDLIADSVEYMVNGHCADAMICISNCDKITPGMMLAALRLNIPVIFVSGGPMEAGKTKLANIDIKLDLVDAMVKGADESVSDADSDQVERSACPTCGSCSGMFTANSMNCLLEAIGLALPGNGTTLATHKDRKQLYVEAGARIVDLCREYYQKDNQEVLPRAIANKTAFMNAMVVDIAMGGSSNTVLHLLAAAQEAGVDFDMSHIDALSRKTPFLCKVAPATPEYHIEDVHRAGGMMAIVRELGKAGLVDMSVNHVAGSTMAELVKKWDATDPTNEAARKFYRAGPAGIRTTKAMSQECRWDEGDNDREHGCIRSVEHAFRQDGGLAVLSGNLAVDGCVVKSAGVVDDMLHFEGTAVVYESQDDSVEGILNDEVKAGDVVVIRYEGPKGGPGMQEMLYPTSYLKSKGLAEKCALITDGRFSGGTSGLSIGHVSPEAASGGAIAYVENGDKIIIDIATREITLALSDAELEARKQKQLARGKQAYKPLDRQRYVSSALKAYALLATSADKGAVRDLAKLEELS.

Asp-81 is a Mg(2+) binding site. Cys-122 is a [2Fe-2S] cluster binding site. Mg(2+) contacts are provided by Asp-123 and Lys-124. At Lys-124 the chain carries N6-carboxylysine. Cys-195 is a [2Fe-2S] cluster binding site. Glu-491 is a Mg(2+) binding site. Ser-517 serves as the catalytic Proton acceptor.

It belongs to the IlvD/Edd family. In terms of assembly, homodimer. [2Fe-2S] cluster serves as cofactor. Mg(2+) is required as a cofactor.

The catalysed reaction is (2R)-2,3-dihydroxy-3-methylbutanoate = 3-methyl-2-oxobutanoate + H2O. The enzyme catalyses (2R,3R)-2,3-dihydroxy-3-methylpentanoate = (S)-3-methyl-2-oxopentanoate + H2O. It participates in amino-acid biosynthesis; L-isoleucine biosynthesis; L-isoleucine from 2-oxobutanoate: step 3/4. The protein operates within amino-acid biosynthesis; L-valine biosynthesis; L-valine from pyruvate: step 3/4. Its function is as follows. Functions in the biosynthesis of branched-chain amino acids. Catalyzes the dehydration of (2R,3R)-2,3-dihydroxy-3-methylpentanoate (2,3-dihydroxy-3-methylvalerate) into 2-oxo-3-methylpentanoate (2-oxo-3-methylvalerate) and of (2R)-2,3-dihydroxy-3-methylbutanoate (2,3-dihydroxyisovalerate) into 2-oxo-3-methylbutanoate (2-oxoisovalerate), the penultimate precursor to L-isoleucine and L-valine, respectively. The protein is Dihydroxy-acid dehydratase 1 of Pseudoalteromonas translucida (strain TAC 125).